Reading from the N-terminus, the 1044-residue chain is MASNDLKTWVSDKLMMLLGYSQAAVVNYLIAMAKKTKSPTELVGELVDYGFSSSGDTRSFAEEIFARVPRKTAGVNLYQKHEAEAAMLVRKQKTYALLDADDDEDEVVVEKKSSVSESRKSDKGKKRFRKKSGQSDESDGEVAVREDSRHVRRKVSEEDDGSESEEERVRDQKEREELEQHLKDRDTARTRKLTEQTLSKKEKEEAVRRANALEKDDLYSLRKVSRQEYLKKREQKKLDELRDEIEDEQYLFGGEKLTETELREFRYKKELYDLVKKRTQDEDNVEEYRIPDAYDQEGGVDQEKRFSVAVQRYRDLDSTEKMNPFAEQEAWEDHQIGKATLKFGAKNKQASDDYQFVFEDQINFIKESVMAGENYEDAMDAKQKSQDLAEKTALEELQEVRRSLPIYTYRDQLLKAVEEHQVLVIVGDTGSGKTTQIPQYLHEAGYTKRGKVGCTQPRRVAAMSVAARVAQEMGVKLGHEVGYSIRFEDCTSDKTVLKYMTDGMLLRELLGEPDLASYSVVIVDEAHERTLSTDILFGLVKDIARFRPDLKLLISSATMDAEKFSDYFDTAPIFSFPGRRYPVEINYTSAPEADYMDAAIVTILTIHVREPLGDILVFFTGQEEIETAEEILKHRIRGLGTKIRELIICPIYANLPSELQAKIFEPTPEGARKVVLATNIAETSLTIDGIKYVVDPGFSKMKSYNPRTGMESLLITPISKASATQRAGRAGRTSPGKCYRLYTAFNYNNDLEENTVPEVQRTNLASVVLALKSLGIHDLINFDFMDPPPAEALVKSLELLFALGALNKLGELTKAGRRMAEFPLDPMLSKMIVVSDKYKCSDEIISIAAMLSIGGSIFYRPKDKQVHADNARMNFHTGNVGDHIALLKVYSSWKETNFSTQWCYENYIQVRSMKRARDIRDQLEGLLERVEIDISSNLNELDSVRKSIVAGFFPHTAKLQKNGSYRTVKHPQTVHIHPNSGLSQVLPRWVVYHELVLTSKEYMRQVTELKPEWLIELAPHYYQLKDVEDAASKKMPKGAGKAAM.

Residues E106–A206 form a disordered region. Positions V108–S121 are enriched in basic and acidic residues. The span at D122–S132 shows a compositional bias: basic residues. 2 positions are modified to phosphoserine: S135 and S138. Over residues E157–E166 the composition is skewed to acidic residues. The segment covering E167–A206 has biased composition (basic and acidic residues). Residues L414–P577 enclose the Helicase ATP-binding domain. Position 427 to 434 (G427 to T434) interacts with ATP. A DEAH box motif is present at residues D524–H527. Residues I600–G775 form the Helicase C-terminal domain.

The protein belongs to the DEAD box helicase family. DEAH subfamily. PRP2 sub-subfamily. In terms of tissue distribution, widely expressed.

It catalyses the reaction ATP + H2O = ADP + phosphate + H(+). Involved in pre-mRNA splicing. This is Pre-mRNA-splicing factor ATP-dependent RNA helicase DEAH1 from Arabidopsis thaliana (Mouse-ear cress).